The chain runs to 254 residues: Imidazole glycerol phosphate synthase subunit HisF (254 aa).

Catalysis depends on residues D13 and D132.

The protein belongs to the HisA/HisF family. As to quaternary structure, heterodimer of HisH and HisF.

It is found in the cytoplasm. It carries out the reaction 5-[(5-phospho-1-deoxy-D-ribulos-1-ylimino)methylamino]-1-(5-phospho-beta-D-ribosyl)imidazole-4-carboxamide + L-glutamine = D-erythro-1-(imidazol-4-yl)glycerol 3-phosphate + 5-amino-1-(5-phospho-beta-D-ribosyl)imidazole-4-carboxamide + L-glutamate + H(+). The protein operates within amino-acid biosynthesis; L-histidine biosynthesis; L-histidine from 5-phospho-alpha-D-ribose 1-diphosphate: step 5/9. In terms of biological role, IGPS catalyzes the conversion of PRFAR and glutamine to IGP, AICAR and glutamate. The HisF subunit catalyzes the cyclization activity that produces IGP and AICAR from PRFAR using the ammonia provided by the HisH subunit. The polypeptide is Imidazole glycerol phosphate synthase subunit HisF (Nautilia profundicola (strain ATCC BAA-1463 / DSM 18972 / AmH)).